The following is a 192-amino-acid chain: Orotate phosphoribosyltransferase (192 aa).

5-phospho-alpha-D-ribose 1-diphosphate is bound by residues arginine 102, lysine 103, lysine 106, and 129-137 (EDVVTTGRS). Threonine 133 and arginine 161 together coordinate orotate.

Belongs to the purine/pyrimidine phosphoribosyltransferase family. PyrE subfamily. In terms of assembly, homodimer. Requires Mg(2+) as cofactor.

The enzyme catalyses orotidine 5'-phosphate + diphosphate = orotate + 5-phospho-alpha-D-ribose 1-diphosphate. The protein operates within pyrimidine metabolism; UMP biosynthesis via de novo pathway; UMP from orotate: step 1/2. Catalyzes the transfer of a ribosyl phosphate group from 5-phosphoribose 1-diphosphate to orotate, leading to the formation of orotidine monophosphate (OMP). This chain is Orotate phosphoribosyltransferase, found in Prochlorococcus marinus (strain SARG / CCMP1375 / SS120).